A 394-amino-acid polypeptide reads, in one-letter code: Saposin-like protein 11 (394 aa).

A signal peptide spans 1 to 18; sequence MSVFRFLLFLSLLVGSNA. 2 N-linked (GlcNAc...) asparagine glycosylation sites follow: Asn-25 and Asn-272. In terms of domain architecture, Saposin B-type spans 306 to 394; the sequence is GNMVCDICEK…SFCKHVPFCK (89 aa). 3 disulfides stabilise this stretch: Cys-310-Cys-393, Cys-313-Cys-387, and Cys-343-Cys-359.

The chain is Saposin-like protein 11 (spp-11) from Caenorhabditis elegans.